The primary structure comprises 611 residues: Fatty acid photodecarboxylase, chloroplastic (611 aa).

Residues 1–22 form a disordered region; sequence MMLGPKTVTRGATKGAAPRSMA. The transit peptide at 1–36 directs the protein to the chloroplast; sequence MMLGPKTVTRGATKGAAPRSMAARRVGGARRLSVRA. FAD is bound by residues 55–56, glutamate 76, methionine 125, serine 129, and 133–136; these read TA and NATL. Positions 392, 412, 427, and 447 each coordinate hexadecanoate. Glycine 582 provides a ligand contact to FAD.

This sequence belongs to the GMC oxidoreductase family. The cofactor is FAD.

The protein localises to the plastid. Its subcellular location is the chloroplast. It catalyses the reaction a long-chain fatty acid + hnu + H(+) = a long-chain alkane + CO2. The catalysed reaction is hnu + hexadecanoate + H(+) = pentadecane + CO2. With respect to regulation, activated by blue light and repressed by red light. Catalyzes the decarboxylation of free fatty acids to n-alkanes or n-alkenes in response to blue light. Substrate preference is toward fatty acids with C17 or C18 chains. Saturated fatty acids are converted to alkanes, not alkenes. The decarboxylation is initiated through electron abstraction from the fatty acid by the photo-excited FAD. This Chlamydomonas reinhardtii (Chlamydomonas smithii) protein is Fatty acid photodecarboxylase, chloroplastic.